The following is a 649-amino-acid chain: Acetyl-coenzyme A synthetase (649 aa).

Residues arginine 191–arginine 194, threonine 312, and asparagine 336 contribute to the CoA site. ATP contacts are provided by residues glycine 388–proline 390, aspartate 412–threonine 417, aspartate 501, and arginine 516. Residue serine 524 coordinates CoA. Arginine 527 lines the ATP pocket. Mg(2+) is bound by residues valine 538, histidine 540, and valine 543. Residue arginine 585 participates in CoA binding. N6-acetyllysine is present on lysine 610.

It belongs to the ATP-dependent AMP-binding enzyme family. Requires Mg(2+) as cofactor. Acetylated. Deacetylation by the SIR2-homolog deacetylase activates the enzyme.

It carries out the reaction acetate + ATP + CoA = acetyl-CoA + AMP + diphosphate. Catalyzes the conversion of acetate into acetyl-CoA (AcCoA), an essential intermediate at the junction of anabolic and catabolic pathways. AcsA undergoes a two-step reaction. In the first half reaction, AcsA combines acetate with ATP to form acetyl-adenylate (AcAMP) intermediate. In the second half reaction, it can then transfer the acetyl group from AcAMP to the sulfhydryl group of CoA, forming the product AcCoA. The sequence is that of Acetyl-coenzyme A synthetase from Marinobacter nauticus (strain ATCC 700491 / DSM 11845 / VT8) (Marinobacter aquaeolei).